Reading from the N-terminus, the 310-residue chain is Olfactory receptor 5P53 (310 aa).

At 1 to 25 the chain is on the extracellular side; sequence MEAENHTTVAELIILGLTEDPKLCI. A glycan (N-linked (GlcNAc...) asparagine) is linked at asparagine 5. Residues 26 to 46 form a helical membrane-spanning segment; it reads VFFVIFLGVYIVTLVGNISII. Topologically, residues 47–54 are cytoplasmic; it reads TLIRISSQ. Residues 55–75 traverse the membrane as a helical segment; the sequence is LHTPMYLFLSHLAFVDILYST. The Extracellular portion of the chain corresponds to 76–99; sequence SVSVIMHMELLGHGLALPVAACAA. A disulfide bond links cysteine 97 and cysteine 189. Residues 100–120 form a helical membrane-spanning segment; the sequence is QLCITVSFGSAECFLLAAMAY. Topologically, residues 121 to 133 are cytoplasmic; sequence DRYVAICSPLLYS. Residues 134–154 traverse the membrane as a helical segment; that stretch reads TLMSPRVCFLLLGMSYVGGCM. The Extracellular portion of the chain corresponds to 155–196; sequence NGWTFTGCLLSLSFCGPNQIDHFFCDFSPLLKLSCSDVSIIG. The chain crosses the membrane as a helical span at residues 197–217; sequence IIPSISSGSIIVVTVFVIAVS. The Cytoplasmic portion of the chain corresponds to 218–237; that stretch reads YIYILITILNMRSTEGRHKA. Residues 238–258 form a helical membrane-spanning segment; it reads FSTCTSHLTAVTLYYGTITFI. Over 259–271 the chain is Extracellular; the sequence is YVMPKSNYSTEQN. Residue asparagine 265 is glycosylated (N-linked (GlcNAc...) asparagine). The chain crosses the membrane as a helical span at residues 272–292; it reads KVLSVFYTVVIPMLNPLIYSL. Topologically, residues 293–310 are cytoplasmic; the sequence is RNRDVKEALRKATVRVYS.

The protein belongs to the G-protein coupled receptor 1 family.

It is found in the cell membrane. In terms of biological role, potential odorant receptor. The polypeptide is Olfactory receptor 5P53 (Mus musculus (Mouse)).